Consider the following 435-residue polypeptide: uncharacterized protein (435 aa).

12 helical membrane-spanning segments follow: residues 26–46 (LLSGIIILNYFDRVAISVAAP), 61–81 (IVFSIYTYSYTLMQLPVGSLL), 96–116 (IWSFLTILLAFLQGKLLLYLF), 119–139 (LIGLTSASAFPAASKATALWF), 150–170 (LFDSAAKFSNVIGAPLVAFLV), 177–197 (VAFLTIGCINVLFTIFFWQYY), 242–262 (VWGLMIGFTGYGYTFNLLLTW), 281–301 (FTAVPWLISTISGIAVGGWLV), 325–345 (FGFFFLGSILTNNITVAIICI), 347–367 (IGLAGISATAPVGWSISAELA), 385–405 (LFGGIIAASLTGYLFDVTGSF), and 407–427 (LSFLVAGFVLLLGLVFYVFVL).

This sequence belongs to the major facilitator superfamily. Phthalate permease family.

The protein localises to the cell membrane. This is an uncharacterized protein from Bacillus subtilis (strain 168).